The following is a 223-amino-acid chain: All-trans retinoic acid-induced differentiation factor (223 aa).

The signal sequence occupies residues 1–25 (MASRESGGSRAAALLLVLGVERALA). At 26–193 (LPEICTLCPG…YKCMRQGSFS (168 aa)) the chain is on the extracellular side. Residues 146-187 (QRDLCNSTGSPEMCPENGSCASDGPGLLQCVCADGFHGYKCM) form the EGF-like domain. Cystine bridges form between C150–C165, C159–C175, and C177–C186. The helical transmembrane segment at 194–214 (LLMFFGILGSTTLAISILLWG) threads the bilayer. At 215–223 (TQRRKAKAS) the chain is on the cytoplasmic side.

As to quaternary structure, interacts with NELL1; the interaction promotes osteoblastic differentiation and mineralization. Interacts with SLC37A3; the interaction is direct and both proteins are mutually dependent for their stability.

Its subcellular location is the nucleus envelope. The protein resides in the cell membrane. It is found in the lysosome membrane. In terms of biological role, promotes osteoblast cell differentiation and terminal mineralization. Plays a role in inducing the cell cycle arrest via inhibiting CCND1 expression in all-trans-retinoic acid (ATRA) signal pathway. In osteoclasts, forms a transporter complex with ATRAID for nitrogen-containing-bisphophonates (N-BPs) required for releasing N-BP molecules that have trafficked to lysosomes through fluid-phase endocytosis into the cytosol. The polypeptide is All-trans retinoic acid-induced differentiation factor (Atraid) (Mus musculus (Mouse)).